The following is a 161-amino-acid chain: 4-hydroxybenzoyl-CoA reductase subunit gamma (161 aa).

Residues 3–79 (NILRLTLNGR…GKKVETVESL (77 aa)) form the 2Fe-2S ferredoxin-type domain. Residues Cys41, Cys46, Cys49, Cys61, Cys100, Cys103, Cys135, and Cys137 each contribute to the [2Fe-2S] cluster site.

As to quaternary structure, heterohexamer of two alpha, two beta and two gamma subunits. The cofactor is [2Fe-2S] cluster.

The enzyme catalyses oxidized 2[4Fe-4S]-[ferredoxin] + benzoyl-CoA + H2O = 4-hydroxybenzoyl-CoA + reduced 2[4Fe-4S]-[ferredoxin] + 2 H(+). Inactivated by low concentrations of cyanide in vitro. Component of a complex that catalyzes the reductive dehydroxylation of 4-hydroxybenzoyl-CoA to benzoyl-CoA. Reaction is not reversible. Is a key enzyme in the anaerobic degradation of phenolic compounds. In Thauera aromatica, this protein is 4-hydroxybenzoyl-CoA reductase subunit gamma (hcrC).